Here is a 180-residue protein sequence, read N- to C-terminus: ATP synthase subunit delta (180 aa).

The protein belongs to the ATPase delta chain family. F-type ATPases have 2 components, F(1) - the catalytic core - and F(0) - the membrane proton channel. F(1) has five subunits: alpha(3), beta(3), gamma(1), delta(1), epsilon(1). CF(0) has four main subunits: a(1), b(1), b'(1) and c(10-14). The alpha and beta chains form an alternating ring which encloses part of the gamma chain. F(1) is attached to F(0) by a central stalk formed by the gamma and epsilon chains, while a peripheral stalk is formed by the delta, b and b' chains.

Its subcellular location is the cellular thylakoid membrane. Functionally, f(1)F(0) ATP synthase produces ATP from ADP in the presence of a proton or sodium gradient. F-type ATPases consist of two structural domains, F(1) containing the extramembraneous catalytic core and F(0) containing the membrane proton channel, linked together by a central stalk and a peripheral stalk. During catalysis, ATP synthesis in the catalytic domain of F(1) is coupled via a rotary mechanism of the central stalk subunits to proton translocation. This protein is part of the stalk that links CF(0) to CF(1). It either transmits conformational changes from CF(0) to CF(1) or is implicated in proton conduction. This chain is ATP synthase subunit delta, found in Prochlorococcus marinus subsp. pastoris (strain CCMP1986 / NIES-2087 / MED4).